The sequence spans 310 residues: 4-diphosphocytidyl-2-C-methyl-D-erythritol kinase (310 aa).

Lys11 is an active-site residue. Residue 95–105 (PIGAGLAGGSA) coordinates ATP. The active site involves Asp137.

The protein belongs to the GHMP kinase family. IspE subfamily.

The enzyme catalyses 4-CDP-2-C-methyl-D-erythritol + ATP = 4-CDP-2-C-methyl-D-erythritol 2-phosphate + ADP + H(+). Its pathway is isoprenoid biosynthesis; isopentenyl diphosphate biosynthesis via DXP pathway; isopentenyl diphosphate from 1-deoxy-D-xylulose 5-phosphate: step 3/6. In terms of biological role, catalyzes the phosphorylation of the position 2 hydroxy group of 4-diphosphocytidyl-2C-methyl-D-erythritol. The chain is 4-diphosphocytidyl-2-C-methyl-D-erythritol kinase from Acaryochloris marina (strain MBIC 11017).